A 931-amino-acid chain; its full sequence is Probable ubiquitin-like-specific protease 2B (931 aa).

A disordered region spans residues serine 204–tryptophan 224. The span at serine 215–tryptophan 224 shows a compositional bias: acidic residues. Active-site residues include histidine 489, aspartate 522, and cysteine 577. Positions histidine 825–lysine 931 are disordered. Polar residues predominate over residues serine 839–aspartate 851. Over residues asparagine 873–proline 904 the composition is skewed to basic and acidic residues.

Belongs to the peptidase C48 family.

Its function is as follows. Protease that catalyzes two essential functions in the SUMO pathway: processing of full-length SUMOs to their mature forms and deconjugation of SUMO from targeted proteins. This is Probable ubiquitin-like-specific protease 2B (ULP2B) from Arabidopsis thaliana (Mouse-ear cress).